The following is a 556-amino-acid chain: Formate--tetrahydrofolate ligase (556 aa).

Threonine 65–serine 72 contacts ATP.

It belongs to the formate--tetrahydrofolate ligase family.

The enzyme catalyses (6S)-5,6,7,8-tetrahydrofolate + formate + ATP = (6R)-10-formyltetrahydrofolate + ADP + phosphate. Its pathway is one-carbon metabolism; tetrahydrofolate interconversion. The polypeptide is Formate--tetrahydrofolate ligase (Clostridium beijerinckii (strain ATCC 51743 / NCIMB 8052) (Clostridium acetobutylicum)).